The sequence spans 304 residues: MPQQLSPINIETKKAISNARLKPLDIHYNESKPTTIQNTGKLVRINFKGGYISGGFLPNEYVLSSLHIYWGKEDDYGSNHLIDVYKYSGEINLVHWNKKKYSSYEEAKKHDDGLIIISIFLQVSDHKNVYFQKIVNQLDSIRSANTSAPFDSVFYLDNLLPSKLDYFTYLGTTINHSADAVWIIFPTPINIHSDQLSKFRTLLSSSNHEGKPHYITENYRNPYKLNDDTQVYYSGEIIRAATTPPARENYFMRWLSDLRETCFSYYQKYIEENKTFAIIAIVFVFILTAILFFMSRRYSREKQN.

Positions 1–235 constitute an Alpha-carbonic anhydrase domain; the sequence is MPQQLSPINI…NDDTQVYYSG (235 aa). At 1 to 275 the chain is on the virion surface side; the sequence is MPQQLSPINI…YQKYIEENKT (275 aa). The chain crosses the membrane as a helical span at residues 276 to 294; it reads FAIIAIVFVFILTAILFFM. Topologically, residues 295–304 are intravirion; the sequence is SRRYSREKQN.

The protein belongs to the alpha-carbonic anhydrase family. Homodimer; disulfide-linked. Apparently non-glycosylated.

The protein resides in the virion membrane. In terms of biological role, binds to chondroitin sulfate on the cell surface to provide virion attachment to target cell. This Homo sapiens (Human) protein is Cell surface-binding protein OPG105 (OPG105).